The chain runs to 622 residues: DNA mismatch repair protein MutL (622 aa).

Belongs to the DNA mismatch repair MutL/HexB family.

In terms of biological role, this protein is involved in the repair of mismatches in DNA. It is required for dam-dependent methyl-directed DNA mismatch repair. May act as a 'molecular matchmaker', a protein that promotes the formation of a stable complex between two or more DNA-binding proteins in an ATP-dependent manner without itself being part of a final effector complex. The sequence is that of DNA mismatch repair protein MutL from Clostridium acetobutylicum (strain ATCC 824 / DSM 792 / JCM 1419 / IAM 19013 / LMG 5710 / NBRC 13948 / NRRL B-527 / VKM B-1787 / 2291 / W).